A 394-amino-acid chain; its full sequence is DNA primase large subunit PriL (394 aa).

Residues C231, C340, C351, and C357 each contribute to the [4Fe-4S] cluster site.

It belongs to the eukaryotic-type primase large subunit family. In terms of assembly, heterodimer of a small subunit (PriS) and a large subunit (PriL). [4Fe-4S] cluster serves as cofactor.

Functionally, regulatory subunit of DNA primase, an RNA polymerase that catalyzes the synthesis of short RNA molecules used as primers for DNA polymerase during DNA replication. Stabilizes and modulates the activity of the small subunit, increasing the rate of DNA synthesis, and conferring RNA synthesis capability. The DNA polymerase activity may enable DNA primase to also catalyze primer extension after primer synthesis. May also play a role in DNA repair. This Pyrococcus horikoshii (strain ATCC 700860 / DSM 12428 / JCM 9974 / NBRC 100139 / OT-3) protein is DNA primase large subunit PriL.